The primary structure comprises 32 residues: MSSISDTQVYIALVVALIPGLLAWRLATELYK.

A helical membrane pass occupies residues 9–28; that stretch reads VYIALVVALIPGLLAWRLAT.

Belongs to the PsaM family.

It localises to the cellular thylakoid membrane. In Nostoc sp. (strain PCC 7120 / SAG 25.82 / UTEX 2576), this protein is Photosystem I reaction center subunit XII.